Here is a 707-residue protein sequence, read N- to C-terminus: Ribosome biogenesis protein ENP2 (707 aa).

WD repeat units lie at residues 54-94 (EFSE…LKFD), 178-217 (LDTE…RVSK), 226-265 (NRPF…PSII), 269-310 (GYGF…AYAS), and 312-351 (EPSV…PSPR). The interval 523 to 707 (LTAAEESDEE…RASKNAFRGM (185 aa)) is disordered. Residue S529 is modified to Phosphoserine. Residues 532–544 (ERIAMKDGRGHYD) are compositionally biased toward basic and acidic residues. Residues 545-558 (YEDEESDEEESDDE) show a composition bias toward acidic residues. A phosphoserine mark is found at S550 and S555. Composition is skewed to basic and acidic residues over residues 559–598 (TNQK…RFMN), 629–647 (ENGK…RGEA), 659–671 (KDGN…HDNS), and 680–697 (NGNK…ENRR).

The protein belongs to the WD repeat NOL10/ENP2 family. As to quaternary structure, component of the 90S pre-ribosomes.

The protein resides in the nucleus. The protein localises to the nucleolus. May be involved in rRNA-processing and ribosome biosynthesis. The chain is Ribosome biogenesis protein ENP2 (ENP2) from Saccharomyces cerevisiae (strain ATCC 204508 / S288c) (Baker's yeast).